We begin with the raw amino-acid sequence, 278 residues long: Bicarbonate transport system permease protein CmpB (278 aa).

7 consecutive transmembrane segments (helical) span residues 24–44 (LDGILLPLAGILGFLIIWQIF), 93–113 (VAQGFSIAAIIGISVGILVGL), 124–144 (LFQFLRMIAPLAWVPIALVAF), 151–171 (AIFVIFITAVWPILINTAEGV), 196–216 (VVLPAALPYIFTGLRIAIGLS), 217–237 (WLAIIAAEIVMSGIVGIGFFI), and 249–269 (IILAVIYIGAVGLLLDRFVAW). Residues 86–267 (TIASLTRVAQ…AVGLLLDRFV (182 aa)) form the ABC transmembrane type-1 domain.

It belongs to the binding-protein-dependent transport system permease family. As to quaternary structure, the complex is composed of two ATP-binding proteins (CmpC and CmpD), a transmembrane protein (CmpB) and a solute-binding protein (CmpA).

The protein resides in the cell inner membrane. Part of the ABC transporter complex CmpABCD involved in bicarbonate transport. Probably responsible for the translocation of the substrate across the membrane. This chain is Bicarbonate transport system permease protein CmpB (cmpB), found in Synechococcus sp. (strain ATCC 27144 / PCC 6301 / SAUG 1402/1) (Anacystis nidulans).